Consider the following 310-residue polypeptide: Transcriptional activator BRRF1 (310 aa).

The protein belongs to the lymphocryptovirus BBRF1 family.

In terms of biological role, enhances the ability of BRLF1 to induce lytic infection by cooperating with it to transcriptionally activate the BZLF1 promoter. The chain is Transcriptional activator BRRF1 from Epstein-Barr virus (strain AG876) (HHV-4).